Consider the following 358-residue polypeptide: Transcription factor PCF6 (358 aa).

Residues 1 to 29 (MEAAVGDGEGGGGGGGRGKRGRGGGGGEM) are disordered. Positions 7 to 16 (DGEGGGGGGG) are enriched in gly residues. The 59-residue stretch at 52–110 (GKDRHSKVYTAKGIRDRRVRLSVATAIQFYDLQDRLGFDQPSKAIEWLINAASPAIDTL) folds into the TCP domain. 2 disordered regions span residues 127-163 (ADAAPTRRRSQQQQQQLSNKSGCSSTSETSKGSDKEV) and 282-308 (ANRGTLQSNSPSNMSGHHHHHHQQQLQ). Composition is skewed to polar residues over residues 143–156 (LSNKSGCSSTSETS) and 285–296 (GTLQSNSPSNMS).

In terms of assembly, forms homodimers and heterodimers.

Its subcellular location is the nucleus. Its function is as follows. Transcription activator. Binds the promoter core sequence 5'-GGNCC-3'. The sequence is that of Transcription factor PCF6 (PCF6) from Oryza sativa subsp. indica (Rice).